Here is a 168-residue protein sequence, read N- to C-terminus: Iron-sulfur cluster assembly enzyme ISCU (168 aa).

Residues 1–35 (MAAATGAGRLRRAASALLLRSPRLPARELSAPARL) constitute a mitochondrion transit peptide. Position 15 is a phosphoserine (Ser15). The active-site Cysteine persulfide intermediate is the Cys70. Cys70 bears the Cysteine persulfide mark. Zn(2+)-binding residues include Asp72, Cys96, and Cys139. Cys139 functions as the Cysteine persulfide intermediate in the catalytic mechanism. Cys139 carries the post-translational modification Cysteine persulfide.

The protein belongs to the NifU family. As to quaternary structure, homodimer; Tyr-36-mediated dimerization of two iron- and sulfide-containing ISCU subunit bind to the cysteine desulfurase complex. Component of the mitochondrial core iron-sulfur cluster (ISC) complex composed of NFS1, LYRM4, NDUFAB1, ISCU, FXN, and FDX2; this complex is a heterohexamer containing two copies of each monomer. Interacts (D-state) with NFS1 (homodimer form); each monomer interacts with the C-terminal regions of each NFS1 monomer. Interacts (monomer form) with FXN (via ferrous form); the interaction is possible when both are bound to the dimeric form of the cysteine desulfurase complex (NFS1:LYRM4) and enhances FXN interaction to the dimeric form of the cysteine desulfurase complex (NFS1:LYRM4). Interacts with GLRX5. Interacts (D-state) with HSPA9. Interacts (S-state) with HSCB; this interaction stimulates the ATPase activity of HSPA9. Component of a complex composed of FXN, NFS1, LYRM4 and ISCU. Cysteine persulfide is reduced by thiol-containing molecules such as glutathione and L-cysteine. In terms of processing, phosphorylation at Ser-15 is required for ISCU protein stabilization in the cytosol, whereas dephosphorylation of Ser-15, due to the inhibition of mTORC1 (mammalian target of rapamycin complex 1) complex, leads to degradation of the precursor form and ultimately to a decrease in the mitochondrial mature form.

Its subcellular location is the mitochondrion. Functionally, mitochondrial scaffold protein, of the core iron-sulfur cluster (ISC) assembly complex, that provides the structural architecture on which the [2Fe-2S] clusters are assembled. The core iron-sulfur cluster (ISC) assembly complex is involved in the de novo synthesis of a [2Fe-2S] cluster, the first step of the mitochondrial iron-sulfur protein biogenesis. This process is initiated by the cysteine desulfurase complex (NFS1:LYRM4:NDUFAB1) that produces persulfide which is delivered on the scaffold protein ISCU in a FXN-dependent manner. Then this complex is stabilized by FDX2 which provides reducing equivalents to accomplish the [2Fe-2S] cluster assembly. Finally, the [2Fe-2S] cluster is transferred from ISCU to chaperone proteins, including HSCB, HSPA9 and GLRX5. Exists as two slow interchanging conformational states, a structured (S) and disordered (D) form. May modulate NFS1 desulfurase activity in a zinc-dependent manner. Modulates the interaction between FXN and the cysteine desulfurase complex. The protein is Iron-sulfur cluster assembly enzyme ISCU of Mus musculus (Mouse).